Here is a 573-residue protein sequence, read N- to C-terminus: PCNA-interacting partner (573 aa).

Residues 492–532 are disordered; sequence TGGQVKNKPCKNVANKRSKRKQVDIQSETTNAQENEPPQKK. A compositionally biased stretch (polar residues) spans 515–527; sequence DIQSETTNAQENE.

The protein belongs to the PARI family.

It localises to the cytoplasm. Its subcellular location is the nucleus. Required to suppress inappropriate homologous recombination, thereby playing a central role DNA repair and in the maintenance of genomic stability. This is PCNA-interacting partner (parpbp) from Xenopus tropicalis (Western clawed frog).